Reading from the N-terminus, the 202-residue chain is Syndecan-2 (202 aa).

A signal peptide spans 1-18; that stretch reads MQRAWILLTLGLMACVSA. At 19-145 the chain is on the extracellular side; sequence ETRTELTSDK…HSDNLFKRTE (127 aa). Ser41, Ser55, and Ser57 each carry an O-linked (Xyl...) (glycosaminoglycan) serine glycan. 2 disordered regions span residues 41–63 and 88–118; these read SGVY…DEDI and ETMT…ISEA. The span at 91–103 shows a compositional bias: polar residues; it reads TLKTQSITPAQTE. Residues 104 to 117 are compositionally biased toward acidic residues; it reads SPEETDKEEVDISE. Ser116 carries the post-translational modification Phosphoserine. A helical transmembrane segment spans residues 146–170; sequence VLAAVIAGGVIGFLFAIFLILLLVY. The Cytoplasmic portion of the chain corresponds to 171-202; that stretch reads RMRKKDEGSYDLGERKPSSAAYQKAPTKEFYA. Positions 179 to 202 are disordered; the sequence is SYDLGERKPSSAAYQKAPTKEFYA. Ser188 carries the phosphoserine modification.

The protein belongs to the syndecan proteoglycan family. As to quaternary structure, interacts (via cytoplasmic domain) with SARM1. Forms a complex with SDCBP and PDCD6IP. Post-translationally, O-glycosylated; contains both heparan sulfate and chondroitin sulfate. Phosphorylated on serine residues. Preferential expression in cells of mesenchymal origin.

The protein localises to the membrane. Cell surface proteoglycan which regulates dendritic arbor morphogenesis. The sequence is that of Syndecan-2 (Sdc2) from Mus musculus (Mouse).